Here is a 661-residue protein sequence, read N- to C-terminus: Heme transporter BhuA (661 aa).

The signal sequence occupies residues 1–23; that stretch reads MKFTRTLVLASTFLLATVATSQA. Residues 48-159 enclose the TBDR plug domain; that stretch reads KDNIEATGGT…AAGAIRYETV (112 aa). Residues 170 to 661 form the TBDR beta-barrel domain; the sequence is TFGARIIGSY…TFTFQTAFKF (492 aa).

Belongs to the TonB-dependent receptor family.

It localises to the cell outer membrane. Functionally, heme transporter. The sequence is that of Heme transporter BhuA (bhuA) from Brucella suis biovar 1 (strain 1330).